The primary structure comprises 248 residues: Ribosomal RNA small subunit methyltransferase J (248 aa).

S-adenosyl-L-methionine contacts are provided by residues 98–99 (RD), 114–115 (ER), 150–151 (SS), and Asp-168.

It belongs to the methyltransferase superfamily. RsmJ family.

The protein localises to the cytoplasm. The catalysed reaction is guanosine(1516) in 16S rRNA + S-adenosyl-L-methionine = N(2)-methylguanosine(1516) in 16S rRNA + S-adenosyl-L-homocysteine + H(+). Functionally, specifically methylates the guanosine in position 1516 of 16S rRNA. The sequence is that of Ribosomal RNA small subunit methyltransferase J from Shewanella denitrificans (strain OS217 / ATCC BAA-1090 / DSM 15013).